The sequence spans 194 residues: Mitochondrial inner membrane protease ATP23 (194 aa).

The disordered stretch occupies residues 1 to 20 (MEDAAAPNSGSEFNPGARRG). Histidine 96 provides a ligand contact to Zn(2+). Residue glutamate 97 is part of the active site. Position 100 (histidine 100) interacts with Zn(2+).

Belongs to the peptidase M76 family.

It localises to the mitochondrion inner membrane. In terms of biological role, has a dual role in the assembly of mitochondrial ATPase. Acts as a protease that removes the N-terminal 10 residues of mitochondrial ATPase CF(0) subunit 6 (ATP6) at the intermembrane space side. Also involved in the correct assembly of the membrane-embedded ATPase CF(0) particle, probably mediating association of ATP6 with the subunit 9 ring. The chain is Mitochondrial inner membrane protease ATP23 from Arabidopsis thaliana (Mouse-ear cress).